The following is a 247-amino-acid chain: Uridylate kinase (247 aa).

17 to 20 contacts ATP; it reads KFSG. G59 is a binding site for UMP. Residues G60 and R64 each coordinate ATP. UMP is bound by residues D79 and 140–147; that span reads TGNPFFTT. T167, Y173, and D176 together coordinate ATP.

The protein belongs to the UMP kinase family. Homohexamer.

It localises to the cytoplasm. The enzyme catalyses UMP + ATP = UDP + ADP. It functions in the pathway pyrimidine metabolism; CTP biosynthesis via de novo pathway; UDP from UMP (UMPK route): step 1/1. Its activity is regulated as follows. Inhibited by UTP. Its function is as follows. Catalyzes the reversible phosphorylation of UMP to UDP. This chain is Uridylate kinase, found in Legionella pneumophila subsp. pneumophila (strain Philadelphia 1 / ATCC 33152 / DSM 7513).